A 693-amino-acid polypeptide reads, in one-letter code: MAREFSLKNTRNIGIMAHIDAGKTTTTERILYYTGRIHKIGETHEGASQMDWMEQEQERGITITSAATTAQWNGHRINIIDTPGHVDFTVEVERSLRVLDGAVTVLDAQSGVEPQTETVWRQATTYGVPRIVFINKMDKTGADFNYSVGTLHDRLQANAHPIQMPIGAEDQFNAIVDLVEMKLYTYTNDLGTDIEVTEVPEEHLADAEAMREQLIEAVADVNEDLMEKYLGGEEISVDELKAAIRQATCDVEFYPVLAGTAFKNKGVQLMLDAAIEYLPSPLDVKPIIGHAADDENEEIIAKPDDSAPFAALAFKVMTDPFVGKLTFFRVYSGTLNSGSYVQNATKGKRERVGRILQMHANSREEISTVYSGDIAAAVGLKDTTTGDTLCDEKNQVILESMEFPEPVIHLSVEPKSKADQDKMTNALVKLQEEDPTFHAHTDPETGQVIIGGMGELHLDILVDRMKREFKVEATVGAPMVSYRETFKKAAAVQGKFSRQSGGRGQYGDVHIEFSPNEVGGGFEFENAIVGGVIPREYIPSVEAGLRDAMENGVLAGYPLIDVKAKLFDGSYHDVDSSEMAFKVAASLALKEAAKKCDPVILEPMMKVEIVMPEEYMGDIMGDVTSRRGRVEGMEARGNAQVVRAFVPLAEMFGYATNLRSNTQGRGTYSMVFDHYEEVPKSIAEDIIKKNKGE.

The 275-residue stretch at 8–282 (KNTRNIGIMA…AAIEYLPSPL (275 aa)) folds into the tr-type G domain. Residues 17–24 (AHIDAGKT), 81–85 (DTPGH), and 135–138 (NKMD) each bind GTP.

Belongs to the TRAFAC class translation factor GTPase superfamily. Classic translation factor GTPase family. EF-G/EF-2 subfamily.

The protein resides in the cytoplasm. Its function is as follows. Catalyzes the GTP-dependent ribosomal translocation step during translation elongation. During this step, the ribosome changes from the pre-translocational (PRE) to the post-translocational (POST) state as the newly formed A-site-bound peptidyl-tRNA and P-site-bound deacylated tRNA move to the P and E sites, respectively. Catalyzes the coordinated movement of the two tRNA molecules, the mRNA and conformational changes in the ribosome. This is Elongation factor G from Macrococcus caseolyticus (strain JCSC5402) (Macrococcoides caseolyticum).